A 149-amino-acid polypeptide reads, in one-letter code: Large ribosomal subunit protein uL22c (149 aa).

This sequence belongs to the universal ribosomal protein uL22 family. As to quaternary structure, part of the 50S ribosomal subunit.

The protein localises to the plastid. Its subcellular location is the chloroplast. In terms of biological role, this protein binds specifically to 23S rRNA. Its function is as follows. The globular domain of the protein is located near the polypeptide exit tunnel on the outside of the subunit, while an extended beta-hairpin is found that lines the wall of the exit tunnel in the center of the 70S ribosome. The polypeptide is Large ribosomal subunit protein uL22c (rpl22) (Oryza nivara (Indian wild rice)).